Consider the following 575-residue polypeptide: uncharacterized protein (575 aa).

Transmembrane regions (helical) follow at residues 16-36 (FFLD…FPLI), 50-70 (WGLI…SSAL), 132-152 (PEDL…MLFI), 154-174 (WQLA…ALYF), 243-263 (ISYM…TWFV), and 264-284 (IRGS…NVLF). Residues 16-299 (FFLDFFSAIA…INAIIEMYPR (284 aa)) enclose the ABC transmembrane type-1 domain. The ABC transporter domain maps to 333-567 (IRYKHVSFGY…GGLYSRLHQA (235 aa)). Residue 366 to 373 (GPSGAGKS) coordinates ATP.

The protein belongs to the ABC transporter superfamily.

It is found in the cell membrane. It localises to the membrane raft. This is an uncharacterized protein from Bacillus subtilis (strain 168).